A 135-amino-acid polypeptide reads, in one-letter code: Large ribosomal subunit protein uL16 (135 aa).

Belongs to the universal ribosomal protein uL16 family. Part of the 50S ribosomal subunit.

Its function is as follows. Binds 23S rRNA and is also seen to make contacts with the A and possibly P site tRNAs. The protein is Large ribosomal subunit protein uL16 of Coprothermobacter proteolyticus (strain ATCC 35245 / DSM 5265 / OCM 4 / BT).